The following is a 207-amino-acid chain: GTP cyclohydrolase-2 (207 aa).

A GTP-binding site is contributed by 49-53; it reads RTHSE. Residues cysteine 54, cysteine 65, and cysteine 67 each coordinate Zn(2+). GTP-binding positions include glutamine 70, 92 to 94, and threonine 114; that span reads EGR. The Proton acceptor role is filled by aspartate 126. The active-site Nucleophile is arginine 128. The GTP site is built by threonine 149 and lysine 154.

The protein belongs to the GTP cyclohydrolase II family. The cofactor is Zn(2+).

The catalysed reaction is GTP + 4 H2O = 2,5-diamino-6-hydroxy-4-(5-phosphoribosylamino)-pyrimidine + formate + 2 phosphate + 3 H(+). It functions in the pathway cofactor biosynthesis; riboflavin biosynthesis; 5-amino-6-(D-ribitylamino)uracil from GTP: step 1/4. Its function is as follows. Catalyzes the conversion of GTP to 2,5-diamino-6-ribosylamino-4(3H)-pyrimidinone 5'-phosphate (DARP), formate and pyrophosphate. The chain is GTP cyclohydrolase-2 from Hahella chejuensis (strain KCTC 2396).